The chain runs to 779 residues: Phosphoribosylformylglycinamidine synthase subunit PurL (779 aa).

His-52 is a catalytic residue. Positions 55 and 94 each coordinate ATP. Position 96 (Glu-96) interacts with Mg(2+). Substrate is bound by residues 97–100 and Arg-119; that span reads SHNH. The active-site Proton acceptor is His-98. Asp-120 contacts Mg(2+). Substrate is bound at residue Gln-243. Mg(2+) is bound at residue Asp-271. 315–317 contacts substrate; the sequence is ESQ. Positions 523 and 560 each coordinate ATP. Asn-561 provides a ligand contact to Mg(2+). Substrate is bound at residue Ser-563.

The protein belongs to the FGAMS family. Monomer. Part of the FGAM synthase complex composed of 1 PurL, 1 PurQ and 2 PurS subunits.

The protein localises to the cytoplasm. The enzyme catalyses N(2)-formyl-N(1)-(5-phospho-beta-D-ribosyl)glycinamide + L-glutamine + ATP + H2O = 2-formamido-N(1)-(5-O-phospho-beta-D-ribosyl)acetamidine + L-glutamate + ADP + phosphate + H(+). The protein operates within purine metabolism; IMP biosynthesis via de novo pathway; 5-amino-1-(5-phospho-D-ribosyl)imidazole from N(2)-formyl-N(1)-(5-phospho-D-ribosyl)glycinamide: step 1/2. Functionally, part of the phosphoribosylformylglycinamidine synthase complex involved in the purines biosynthetic pathway. Catalyzes the ATP-dependent conversion of formylglycinamide ribonucleotide (FGAR) and glutamine to yield formylglycinamidine ribonucleotide (FGAM) and glutamate. The FGAM synthase complex is composed of three subunits. PurQ produces an ammonia molecule by converting glutamine to glutamate. PurL transfers the ammonia molecule to FGAR to form FGAM in an ATP-dependent manner. PurS interacts with PurQ and PurL and is thought to assist in the transfer of the ammonia molecule from PurQ to PurL. The polypeptide is Phosphoribosylformylglycinamidine synthase subunit PurL (Prochlorococcus marinus (strain MIT 9515)).